The sequence spans 557 residues: NAD(P)H-quinone oxidoreductase chain 4 (557 aa).

Helical transmembrane passes span 25-45 (FPWL…VPFI), 57-77 (YALF…LKGF), 111-131 (LILL…PVSF), 133-153 (PKLF…VFAV), 157-177 (LLFF…LAIW), 189-209 (FIIY…AMGF), 230-250 (GFQL…LPIV), 264-284 (TAPV…YALL), 298-318 (FAPL…LTSF), 327-347 (IAYS…SFST), 353-373 (AMLQ…LVGA), 397-417 (FALW…SGFV), 438-458 (IVIA…LLSM), and 485-505 (IYII…PRIM).

This sequence belongs to the complex I subunit 4 family.

It is found in the cellular thylakoid membrane. The catalysed reaction is a plastoquinone + NADH + (n+1) H(+)(in) = a plastoquinol + NAD(+) + n H(+)(out). It carries out the reaction a plastoquinone + NADPH + (n+1) H(+)(in) = a plastoquinol + NADP(+) + n H(+)(out). In terms of biological role, NDH-1 shuttles electrons from NAD(P)H, via FMN and iron-sulfur (Fe-S) centers, to quinones in the respiratory chain. The immediate electron acceptor for the enzyme in this species is believed to be plastoquinone. Couples the redox reaction to proton translocation (for every two electrons transferred, four hydrogen ions are translocated across the cytoplasmic membrane), and thus conserves the redox energy in a proton gradient. The sequence is that of NAD(P)H-quinone oxidoreductase chain 4 from Prochlorococcus marinus (strain SARG / CCMP1375 / SS120).